Reading from the N-terminus, the 597-residue chain is Lipoprotein LpqB (597 aa).

Positions 1–28 (MTPGRRSALLSRSVCGAIVLAVLVTVSG) are cleaved as a signal peptide. Cys-29 carries the N-palmitoyl cysteine lipid modification. Cys-29 carries the S-diacylglycerol cysteine lipid modification. A compositionally biased stretch (polar residues) spans 38–51 (PQAIGTINRDSPGS). Residues 38 to 58 (PQAIGTINRDSPGSSVAAPAP) are disordered.

Belongs to the LpqB lipoprotein family.

It is found in the cell membrane. The chain is Lipoprotein LpqB from Rhodococcus jostii (strain RHA1).